The chain runs to 308 residues: 3'(2'),5'-bisphosphate nucleotidase 1 (308 aa).

An N-acetylalanine modification is found at A2. The Proton acceptor role is filled by D51. Residues E74, D117, L119, and D120 each coordinate Mg(2+). Residue T122 is the Proton acceptor of the active site. T122 carries the post-translational modification Phosphothreonine. AMP contacts are provided by T195, H198, G220, and K224. At S240 the chain carries Phosphoserine. K244 is modified (N6-succinyllysine). A Mg(2+)-binding site is contributed by D247.

The protein belongs to the inositol monophosphatase superfamily. Mg(2+) is required as a cofactor. As to expression, widely expressed. Highly expressed in kidney.

It catalyses the reaction adenosine 3',5'-bisphosphate + H2O = AMP + phosphate. The catalysed reaction is adenosine 2',5'-bisphosphate + H2O = AMP + phosphate. It carries out the reaction 3'-phosphoadenylyl sulfate + H2O = adenosine 5'-phosphosulfate + phosphate. The enzyme catalyses 1D-myo-inositol 1,4-bisphosphate + H2O = 1D-myo-inositol 4-phosphate + phosphate. It catalyses the reaction 1D-myo-inositol 1,3,4-trisphosphate + H2O = 1D-myo-inositol 3,4-bisphosphate + phosphate. With respect to regulation, uncompetitively inhibited by Li(+) (IC(50)=157 uM). PAP hydrolysis is competitively inhibited by PAPS (IC(50)=0.7 uM) and by inositol 1,4-bisphosphate (IC(50)=15 uM). Phosphatase that converts 3'(2')-phosphoadenosine 5'-phosphate (PAP) to AMP and adenosine 3'-phosphate 5'-phosphosulfate (PAPS) to adenosine 5'-phosphosulfate (APS). Is also able to hydrolyze inositol 1,4-bisphosphate (Ins(1,4)P2) and inositol 1,3,4-trisphosphate (Ins(1,3,4)P3), and is not active on Ins(1)P, Ins(4)P, Ins(3,4)P2, Ins(1,4,5)P3, Ins(1,3,4,5)P4, Ins(1,3,4,5,6)P5 or InsP6. Probably prevents the toxic accumulation of PAP, a compound which inhibits a variety of proteins, including PAPS-utilizing enzymes such as sulfotransferases, and RNA processing enzymes. Could also play a role in inositol recycling and phosphoinositide metabolism. This is 3'(2'),5'-bisphosphate nucleotidase 1 (Bpnt1) from Mus musculus (Mouse).